The primary structure comprises 211 residues: Transcriptional regulatory protein RcsA (211 aa).

One can recognise an HTH luxR-type domain in the interval 135–200; that stretch reads SEVHPFTLSQ…VIYHVVRLTD (66 aa). The segment at residues 159–178 is a DNA-binding region (H-T-H motif); the sequence is TIQISDKMQIKAKTVSSHKG.

Belongs to the RcsA family.

Component of the Rcs signaling system, which controls transcription of numerous genes. Binds to DNA to regulate expression of genes. In Erwinia amylovora (Fire blight bacteria), this protein is Transcriptional regulatory protein RcsA.